The chain runs to 1519 residues: Dicer-like protein 1 (1519 aa).

The segment covering 1–13 (MTHQNTETASLAT) has biased composition (polar residues). The segment at 1–62 (MTHQNTETAS…KDPSQRQRQQ (62 aa)) is disordered. The span at 39–48 (SDESEGSEEE) shows a compositional bias: acidic residues. Positions 116 to 297 (LFERAKVQNT…EAARNLEALL (182 aa)) constitute a Helicase ATP-binding domain. 129 to 136 (LDTGSGKT) contributes to the ATP binding site. Positions 242-245 (DEAH) match the DEAH box motif. One can recognise a Helicase C-terminal domain in the interval 431–601 (ALSSKVRVLW…QLLPEDRILH (171 aa)). A Dicer dsRNA-binding fold domain is found at 634–724 (AITVLARYAS…NSVYHRRLPA (91 aa)). In terms of domain architecture, PAZ spans 882–1001 (DDIEYQADMP…ICIEPLKISA (120 aa)). RNase III domains lie at 1026–1184 (GLEA…LTPG) and 1235–1387 (CRRV…VDSN). Residues Glu-1275, Asp-1373, and Glu-1376 each coordinate Mg(2+). The 69-residue stretch at 1421-1489 (TFLHNKLTNE…SENALTELLH (69 aa)) folds into the DRBM domain. Zn(2+) contacts are provided by Cys-1433, His-1460, Cys-1501, and Cys-1503.

It belongs to the helicase family. Dicer subfamily. Mg(2+) serves as cofactor. The cofactor is Mn(2+).

Functionally, dicer-like endonuclease involved in cleaving double-stranded RNA in the RNA interference (RNAi) pathway. Produces 21 to 25 bp dsRNAs (siRNAs) which target the selective destruction of homologous RNAs leading to sequence-specific suppression of gene expression, called post-transcriptional gene silencing (PTGS). Part of a broad host defense response against viral infection and transposons. The sequence is that of Dicer-like protein 1 (dcl1) from Aspergillus terreus (strain NIH 2624 / FGSC A1156).